A 1319-amino-acid polypeptide reads, in one-letter code: Son of sevenless homolog 1 (1319 aa).

The DH domain occupies 200–390 (TYYDLVKAFM…LNVQSGMEKI (191 aa)). The region spanning 444–548 (FIMEGTLTRV…AALISLQYRS (105 aa)) is the PH domain. The region spanning 597–741 (GIPIIKAGTV…SITKIIQRKK (145 aa)) is the N-terminal Ras-GEF domain. A Ras-GEF domain is found at 780 to 1019 (HPIEIARQLT…FNKSLEIEPR (240 aa)). A disordered region spans residues 1019–1101 (RHPKPLPRFP…ASGTSSNTDV (83 aa)). Phosphoserine occurs at positions 1078 and 1082. S1120 and S1147 each carry phosphoserine; by RPS6KA3. Residues 1121-1319 (VSSISLSKGT…PPLLENAHSS (199 aa)) form a disordered region. Phosphoserine occurs at positions 1164, 1196, and 1215. Residues 1194-1203 (PESPPLLPPR) are compositionally biased toward pro residues. The segment covering 1238 to 1250 (SPSPFTPPPPQTP) has biased composition (pro residues). Phosphoserine is present on S1261. Residues 1296–1309 (YKREHTHPSMHRDG) show a composition bias toward basic and acidic residues.

As to quaternary structure, interacts (via C-terminus) with GRB2 (via SH3 domain). Forms a complex with phosphorylated MUC1 and GRB2 (via its SH3 domains). Interacts with phosphorylated LAT2. Interacts with NCK1 and NCK2. Part of a complex consisting of ABI1, EPS8 and SOS1. Interacts (Ser-1120 and Ser-1147 phosphorylated form) with YWHAB and YWHAE. In terms of processing, phosphorylation at Ser-1120 and Ser-1147 by RPS6KA3 create YWHAB and YWHAE binding sites and which contribute to the negative regulation of EGF-induced MAPK1/3 phosphorylation. Expressed in most embryonic and adult tissues.

Promotes the exchange of Ras-bound GDP by GTP. Probably by promoting Ras activation, regulates phosphorylation of MAP kinase MAPK3 in response to EGF. Catalytic component of a trimeric complex that participates in transduction of signals from Ras to Rac by promoting the Rac-specific guanine nucleotide exchange factor (GEF) activity. This Mus musculus (Mouse) protein is Son of sevenless homolog 1 (Sos1).